Consider the following 522-residue polypeptide: Probable protein kinase UbiB (522 aa).

The 379-residue stretch at 119–497 (SFERVPVASA…QRRTNRLLQS (379 aa)) folds into the Protein kinase domain. Residues 125–133 (VASASIAQV) and K151 contribute to the ATP site. D286 (proton acceptor) is an active-site residue. The helical transmembrane segment at 496–516 (QSIIYGGMGFVLGLLALQFLI) threads the bilayer.

The protein belongs to the ABC1 family. UbiB subfamily.

It localises to the cell inner membrane. It functions in the pathway cofactor biosynthesis; ubiquinone biosynthesis [regulation]. In terms of biological role, is probably a protein kinase regulator of UbiI activity which is involved in aerobic coenzyme Q (ubiquinone) biosynthesis. The sequence is that of Probable protein kinase UbiB from Paracidovorax citrulli (strain AAC00-1) (Acidovorax citrulli).